A 472-amino-acid polypeptide reads, in one-letter code: D-inositol 3-phosphate glycosyltransferase (472 aa).

1D-myo-inositol 3-phosphate is bound at residue histidine 48. UDP-N-acetyl-alpha-D-glucosamine is bound by residues 54 to 55 (QP) and glycine 62. Residues 59 to 64 (DAGGMN), lysine 117, tyrosine 150, threonine 174, and arginine 194 each bind 1D-myo-inositol 3-phosphate. UDP-N-acetyl-alpha-D-glucosamine is bound by residues arginine 282, lysine 287, and valine 348. Phenylalanine 357, arginine 358, and alanine 360 together coordinate Mg(2+). Residues glutamate 370 and glutamate 378 each coordinate UDP-N-acetyl-alpha-D-glucosamine. Threonine 384 contacts Mg(2+).

It belongs to the glycosyltransferase group 1 family. MshA subfamily. In terms of assembly, homodimer.

It catalyses the reaction 1D-myo-inositol 3-phosphate + UDP-N-acetyl-alpha-D-glucosamine = 1D-myo-inositol 2-acetamido-2-deoxy-alpha-D-glucopyranoside 3-phosphate + UDP + H(+). Catalyzes the transfer of a N-acetyl-glucosamine moiety to 1D-myo-inositol 3-phosphate to produce 1D-myo-inositol 2-acetamido-2-deoxy-glucopyranoside 3-phosphate in the mycothiol biosynthesis pathway. The sequence is that of D-inositol 3-phosphate glycosyltransferase from Streptomyces griseus subsp. griseus (strain JCM 4626 / CBS 651.72 / NBRC 13350 / KCC S-0626 / ISP 5235).